The chain runs to 457 residues: Siroheme synthase (457 aa).

The tract at residues 1–204 (MDHLPIFCQL…ADEKAVNATT (204 aa)) is precorrin-2 dehydrogenase /sirohydrochlorin ferrochelatase. NAD(+) contacts are provided by residues 22 to 23 (DV) and 43 to 44 (LT). Ser128 is modified (phosphoserine). Residues 216 to 457 (GEVVLVGAGP…RDKLNWFSNH (242 aa)) are uroporphyrinogen-III C-methyltransferase. Pro225 serves as a coordination point for S-adenosyl-L-methionine. Asp248 serves as the catalytic Proton acceptor. Lys270 functions as the Proton donor in the catalytic mechanism. S-adenosyl-L-methionine-binding positions include 301–303 (GGD), Ile306, 331–332 (TA), Met382, and Gly411.

In the N-terminal section; belongs to the precorrin-2 dehydrogenase / sirohydrochlorin ferrochelatase family. This sequence in the C-terminal section; belongs to the precorrin methyltransferase family.

The enzyme catalyses uroporphyrinogen III + 2 S-adenosyl-L-methionine = precorrin-2 + 2 S-adenosyl-L-homocysteine + H(+). The catalysed reaction is precorrin-2 + NAD(+) = sirohydrochlorin + NADH + 2 H(+). It carries out the reaction siroheme + 2 H(+) = sirohydrochlorin + Fe(2+). It functions in the pathway cofactor biosynthesis; adenosylcobalamin biosynthesis; precorrin-2 from uroporphyrinogen III: step 1/1. Its pathway is cofactor biosynthesis; adenosylcobalamin biosynthesis; sirohydrochlorin from precorrin-2: step 1/1. It participates in porphyrin-containing compound metabolism; siroheme biosynthesis; precorrin-2 from uroporphyrinogen III: step 1/1. The protein operates within porphyrin-containing compound metabolism; siroheme biosynthesis; siroheme from sirohydrochlorin: step 1/1. It functions in the pathway porphyrin-containing compound metabolism; siroheme biosynthesis; sirohydrochlorin from precorrin-2: step 1/1. In terms of biological role, multifunctional enzyme that catalyzes the SAM-dependent methylations of uroporphyrinogen III at position C-2 and C-7 to form precorrin-2 via precorrin-1. Then it catalyzes the NAD-dependent ring dehydrogenation of precorrin-2 to yield sirohydrochlorin. Finally, it catalyzes the ferrochelation of sirohydrochlorin to yield siroheme. This Salmonella schwarzengrund (strain CVM19633) protein is Siroheme synthase.